We begin with the raw amino-acid sequence, 73 residues long: Large ribosomal subunit protein bL28 (73 aa).

This sequence belongs to the bacterial ribosomal protein bL28 family.

This is Large ribosomal subunit protein bL28 from Anaeromyxobacter sp. (strain Fw109-5).